A 232-amino-acid chain; its full sequence is Ion-translocating oxidoreductase complex subunit E (232 aa).

The next 6 helical transmembrane spans lie at Ala-18–Gly-38, Leu-39–Ile-59, Ile-69–Ala-89, Glu-93–Gly-113, Ala-128–Met-148, and Pro-182–Ala-202.

It belongs to the NqrDE/RnfAE family. In terms of assembly, the complex is composed of six subunits: RnfA, RnfB, RnfC, RnfD, RnfE and RnfG.

It is found in the cell inner membrane. Part of a membrane-bound complex that couples electron transfer with translocation of ions across the membrane. This is Ion-translocating oxidoreductase complex subunit E from Pseudoalteromonas atlantica (strain T6c / ATCC BAA-1087).